The sequence spans 202 residues: Ribonuclease HII (202 aa).

The RNase H type-2 domain maps to 11–200 (GLIAGVDEVG…VRKAIEEFNR (190 aa)). A divalent metal cation is bound by residues Asp17, Glu18, and Asp109.

The protein belongs to the RNase HII family. Mn(2+) is required as a cofactor. The cofactor is Mg(2+).

Its subcellular location is the cytoplasm. It catalyses the reaction Endonucleolytic cleavage to 5'-phosphomonoester.. Its function is as follows. Endonuclease that specifically degrades the RNA of RNA-DNA hybrids. The chain is Ribonuclease HII from Actinobacillus succinogenes (strain ATCC 55618 / DSM 22257 / CCUG 43843 / 130Z).